The primary structure comprises 319 residues: Large ribosomal subunit protein uL29m (319 aa).

The tract at residues 1 to 55 (MWKRSFHSQGGPLRARTKFTKPKPKQPVLPKDKIRPPTQLTHHSNNLRITEPIPP) is disordered. Over residues 15–24 (ARTKFTKPKP) the composition is skewed to basic residues. Residues 38–48 (TQLTHHSNNLR) show a composition bias toward polar residues.

It belongs to the universal ribosomal protein uL29 family. As to quaternary structure, component of the mitochondrial large ribosomal subunit. Mature mitochondrial ribosomes consist of a small (37S) and a large (54S) subunit. The 37S subunit contains at least 33 different proteins and 1 molecule of RNA (15S). The 54S subunit contains at least 45 different proteins and 1 molecule of RNA (21S).

Its subcellular location is the mitochondrion. This is Large ribosomal subunit protein uL29m (MRPL4) from Saccharomyces cerevisiae (strain YJM789) (Baker's yeast).